Consider the following 486-residue polypeptide: Fructose dehydrogenase cytochrome subunit (486 aa).

Residues 1-25 (MRYFRPLSATAMTTVLLLAGTNVRA) form the signal peptide. Cytochrome c domains follow at residues 38–142 (PSIS…MTEV), 186–294 (DDWN…RSVP), and 330–423 (TKTT…LSHF). Heme c-binding residues include C52, C55, H56, C201, C204, H205, C343, C346, and H347. Residues 458 to 478 (LLGTGGILGAILVVAGLWWLI) traverse the membrane as a helical segment.

As to quaternary structure, heterotrimer composed of FdhL, FdhS and FdhC. Binds 3 heme c groups covalently per subunit.

It is found in the cell membrane. Its function is as follows. Cytochrome subunit of fructose dehydrogenase, an enzyme that catalyzes the oxidation of D-fructose to produce 5-keto-D-fructose. In the complex, mediates both the electron transfer to ubiquinone and the anchoring of the complex to the membrane. This chain is Fructose dehydrogenase cytochrome subunit (fdhC), found in Gluconobacter japonicus.